Reading from the N-terminus, the 64-residue chain is DNA-binding protein 7 (64 aa).

An N6-methyllysine mark is found at lysine 5 and lysine 7.

This sequence belongs to the 7 kDa DNA-binding/endoribonuclease P2 family. In terms of assembly, monomer.

The protein resides in the cytoplasm. Its function is as follows. Can constrain negative DNA supercoils. May be involved in maintaining the integrity of the genome at high temperature. This is DNA-binding protein 7 from Sulfurisphaera tokodaii (strain DSM 16993 / JCM 10545 / NBRC 100140 / 7) (Sulfolobus tokodaii).